A 119-amino-acid polypeptide reads, in one-letter code: Fluoride-specific ion channel FluC 2 (119 aa).

A run of 2 helical transmembrane segments spans residues 1 to 21 and 44 to 64; these read MIFA…ALTS and GAFF…YAFL. Na(+) contacts are provided by G70 and T73. A helical transmembrane segment spans residues 98-118; that stretch reads LLASYLGGAVLLTCGYYLGSL.

This sequence belongs to the fluoride channel Fluc/FEX (TC 1.A.43) family.

The protein resides in the cell membrane. It catalyses the reaction fluoride(in) = fluoride(out). Na(+) is not transported, but it plays an essential structural role and its presence is essential for fluoride channel function. In terms of biological role, fluoride-specific ion channel. Important for reducing fluoride concentration in the cell, thus reducing its toxicity. The sequence is that of Fluoride-specific ion channel FluC 2 from Lactobacillus delbrueckii subsp. bulgaricus (strain ATCC 11842 / DSM 20081 / BCRC 10696 / JCM 1002 / NBRC 13953 / NCIMB 11778 / NCTC 12712 / WDCM 00102 / Lb 14).